The primary structure comprises 648 residues: L-aspartate oxidase 2-b, chloroplastic (648 aa).

Residues 98-101 (SGIA), Lys-120, 127-134 (STNYAQGG), and Asp-298 each bind FAD. The Proton donor/acceptor role is filled by Arg-373. FAD is bound by residues Glu-458 and 474-475 (SL).

Belongs to the FAD-dependent oxidoreductase 2 family. NadB subfamily. Requires FAD as cofactor.

It is found in the plastid. Its subcellular location is the chloroplast. The catalysed reaction is L-aspartate + O2 = iminosuccinate + H2O2. It participates in alkaloid biosynthesis; nicotine biosynthesis. It functions in the pathway cofactor biosynthesis; NAD(+) biosynthesis; iminoaspartate from L-aspartate (oxidase route): step 1/1. In terms of biological role, involved in the biosynthesis of pyridine alkaloid natural products, leading mainly to the production of anabasine, anatabine, nicotine and nornicotine, effective deterrents against herbivores with antiparasitic and pesticide properties (neurotoxins); nornicotine serves as the precursor in the synthesis of the carcinogen compound N'-nitrosonornicotine (NNN). Catalyzes the oxidation of L-aspartate to iminoaspartate. The polypeptide is L-aspartate oxidase 2-b, chloroplastic (Nicotiana tabacum (Common tobacco)).